Reading from the N-terminus, the 406-residue chain is Tyrosine--tRNA ligase (406 aa).

Y35 contributes to the L-tyrosine binding site. A 'HIGH' region motif is present at residues 40 to 49 (PTADSLHVGH). L-tyrosine is bound by residues Y168 and Q172. The 'KMSKS' region signature appears at 228-232 (KMGKT). Residue K231 coordinates ATP. Positions 340-404 (SELLDILVEA…RGKKNYNKIV (65 aa)) constitute an S4 RNA-binding domain.

The protein belongs to the class-I aminoacyl-tRNA synthetase family. TyrS type 1 subfamily. Homodimer.

The protein resides in the cytoplasm. The catalysed reaction is tRNA(Tyr) + L-tyrosine + ATP = L-tyrosyl-tRNA(Tyr) + AMP + diphosphate + H(+). In terms of biological role, catalyzes the attachment of tyrosine to tRNA(Tyr) in a two-step reaction: tyrosine is first activated by ATP to form Tyr-AMP and then transferred to the acceptor end of tRNA(Tyr). The protein is Tyrosine--tRNA ligase of Clostridium perfringens (strain SM101 / Type A).